Here is a 367-residue protein sequence, read N- to C-terminus: Peptide chain release factor 1 (367 aa).

Gln-243 carries the N5-methylglutamine modification.

It belongs to the prokaryotic/mitochondrial release factor family. In terms of processing, methylated by PrmC. Methylation increases the termination efficiency of RF1.

The protein localises to the cytoplasm. Its function is as follows. Peptide chain release factor 1 directs the termination of translation in response to the peptide chain termination codons UAG and UAA. This chain is Peptide chain release factor 1, found in Acidovorax ebreus (strain TPSY) (Diaphorobacter sp. (strain TPSY)).